A 294-amino-acid chain; its full sequence is NAD kinase (294 aa).

The active-site Proton acceptor is D74. NAD(+) is bound by residues D74 to G75, R79, N149 to E150, D179, T190 to S195, and A214.

The protein belongs to the NAD kinase family. A divalent metal cation serves as cofactor.

The protein localises to the cytoplasm. It carries out the reaction NAD(+) + ATP = ADP + NADP(+) + H(+). Functionally, involved in the regulation of the intracellular balance of NAD and NADP, and is a key enzyme in the biosynthesis of NADP. Catalyzes specifically the phosphorylation on 2'-hydroxyl of the adenosine moiety of NAD to yield NADP. This Flavobacterium johnsoniae (strain ATCC 17061 / DSM 2064 / JCM 8514 / BCRC 14874 / CCUG 350202 / NBRC 14942 / NCIMB 11054 / UW101) (Cytophaga johnsonae) protein is NAD kinase.